Here is a 286-residue protein sequence, read N- to C-terminus: Phosphatidylserine decarboxylase proenzyme (286 aa).

Active-site charge relay system; for autoendoproteolytic cleavage activity residues include aspartate 90, histidine 147, and serine 250. Catalysis depends on serine 250, which acts as the Schiff-base intermediate with substrate; via pyruvic acid; for decarboxylase activity. At serine 250 the chain carries Pyruvic acid (Ser); by autocatalysis.

It belongs to the phosphatidylserine decarboxylase family. PSD-B subfamily. Prokaryotic type I sub-subfamily. As to quaternary structure, heterodimer of a large membrane-associated beta subunit and a small pyruvoyl-containing alpha subunit. Pyruvate serves as cofactor. Post-translationally, is synthesized initially as an inactive proenzyme. Formation of the active enzyme involves a self-maturation process in which the active site pyruvoyl group is generated from an internal serine residue via an autocatalytic post-translational modification. Two non-identical subunits are generated from the proenzyme in this reaction, and the pyruvate is formed at the N-terminus of the alpha chain, which is derived from the carboxyl end of the proenzyme. The autoendoproteolytic cleavage occurs by a canonical serine protease mechanism, in which the side chain hydroxyl group of the serine supplies its oxygen atom to form the C-terminus of the beta chain, while the remainder of the serine residue undergoes an oxidative deamination to produce ammonia and the pyruvoyl prosthetic group on the alpha chain. During this reaction, the Ser that is part of the protease active site of the proenzyme becomes the pyruvoyl prosthetic group, which constitutes an essential element of the active site of the mature decarboxylase.

It localises to the cell membrane. It catalyses the reaction a 1,2-diacyl-sn-glycero-3-phospho-L-serine + H(+) = a 1,2-diacyl-sn-glycero-3-phosphoethanolamine + CO2. Its pathway is phospholipid metabolism; phosphatidylethanolamine biosynthesis; phosphatidylethanolamine from CDP-diacylglycerol: step 2/2. Functionally, catalyzes the formation of phosphatidylethanolamine (PtdEtn) from phosphatidylserine (PtdSer). The chain is Phosphatidylserine decarboxylase proenzyme from Psychromonas ingrahamii (strain DSM 17664 / CCUG 51855 / 37).